A 179-amino-acid polypeptide reads, in one-letter code: Replication restart protein DnaT (179 aa).

A compositionally biased stretch (polar residues) spans 151-168; it reads SRSSNGGMPQRDINSVSE. The tract at residues 151 to 179 is disordered; sequence SRSSNGGMPQRDINSVSEPDNHIPPGFRG.

This sequence belongs to the DnaT family. Homooligomerizes. Interacts with PriB. Component of the replication restart primosome. Primosome assembly occurs via a 'hand-off' mechanism. PriA binds to replication forks, subsequently PriB then DnaT bind; DnaT then displaces ssDNA to generate the helicase loading substrate.

Functionally, involved in the restart of stalled replication forks, which reloads the replicative helicase on sites other than the origin of replication. Can function in multiple replication restart pathways. Displaces ssDNA from a PriB-ssDNA complex. Probably forms a spiral filament on ssDNA. This chain is Replication restart protein DnaT, found in Salmonella heidelberg (strain SL476).